Here is a 432-residue protein sequence, read N- to C-terminus: Crenactin (432 aa).

Residues 20–24, 182–184, 235–239, 354–358, and glutamine 399 each bind ATP; these read TSYVK, GGH, EVVKR, and GAFSW.

The protein belongs to the actin family. In terms of assembly, monomer. The crenactin monomers polymerize into right-handed helical filaments, with 8 subunits per complete turn of the helix. Forms single-stranded filaments under high salt concentrations and double-stranded filaments under low salt concentrations. Interacts with arcadin-1 and arcadin-2.

It is found in the cytoplasm. The protein resides in the cytoskeleton. It carries out the reaction ATP + H2O = ADP + phosphate + H(+). Its activity is regulated as follows. Crenactin polymerization is inhibited by interaction with arcadin-2. Also significantly inhibited by elevated antibiotic A22 concentrations. Forms the backbone of an actin-like archaeal cytoskeleton, which is involved in cell shape determination. Has ATPase activity. Shows highest activity towards ATP or GTP as nucleotide, and only residual activity on UTP, CTP and dNTPs. This chain is Crenactin, found in Pyrobaculum calidifontis (strain DSM 21063 / JCM 11548 / VA1).